Consider the following 134-residue polypeptide: D-ribose pyranase (134 aa).

Histidine 20 serves as the catalytic Proton donor. Substrate is bound by residues aspartate 28, histidine 101, and 123–125 (YSN).

Belongs to the RbsD / FucU family. RbsD subfamily. Homodecamer.

It is found in the cytoplasm. It catalyses the reaction beta-D-ribopyranose = beta-D-ribofuranose. It functions in the pathway carbohydrate metabolism; D-ribose degradation; D-ribose 5-phosphate from beta-D-ribopyranose: step 1/2. Its function is as follows. Catalyzes the interconversion of beta-pyran and beta-furan forms of D-ribose. The protein is D-ribose pyranase of Pseudomonas entomophila (strain L48).